The following is a 327-amino-acid chain: DNA-directed RNA polymerase subunit alpha (327 aa).

The tract at residues 1–233 (MVREKVKVST…NLFIPFLHVE (233 aa)) is alpha N-terminal domain (alpha-NTD). The segment at 267–327 (LAFQYIFIDQ…KKILDILEKK (61 aa)) is alpha C-terminal domain (alpha-CTD).

It belongs to the RNA polymerase alpha chain family. In terms of assembly, in plastids the minimal PEP RNA polymerase catalytic core is composed of four subunits: alpha, beta, beta', and beta''. When a (nuclear-encoded) sigma factor is associated with the core the holoenzyme is formed, which can initiate transcription.

The protein resides in the plastid. It is found in the chloroplast. The catalysed reaction is RNA(n) + a ribonucleoside 5'-triphosphate = RNA(n+1) + diphosphate. DNA-dependent RNA polymerase catalyzes the transcription of DNA into RNA using the four ribonucleoside triphosphates as substrates. The protein is DNA-directed RNA polymerase subunit alpha of Draba nemorosa (Woodland whitlowgrass).